Consider the following 422-residue polypeptide: Putative FBD-associated F-box protein At1g55030 (422 aa).

In terms of domain architecture, F-box spans 8 to 60 (TDMISQLPEPLILQILGSLPTKVAITTSVLSKQWQSHWKMMPKLEFDSFLRRL). LRR repeat units follow at residues 132–153 (TLETLELILNVVMDVPPSVYLK), 154–175 (SLKTLYLLAVDFKDDESVINLL), and 180–201 (NLQDLVMRRNSSSNVKTFTIAV). Residues 342 to 391 (EWNQPKNVPECLHHLEKFIWEGYKWKREEIEVAKYILKNTNRLKRAIFSL) enclose the FBD domain.

This chain is Putative FBD-associated F-box protein At1g55030, found in Arabidopsis thaliana (Mouse-ear cress).